A 159-amino-acid polypeptide reads, in one-letter code: Cyclic pyranopterin monophosphate synthase (159 aa).

Residues 75-77 (LCH) and 113-114 (ME) contribute to the substrate site. Asp-128 is a catalytic residue.

The protein belongs to the MoaC family. In terms of assembly, homohexamer; trimer of dimers.

It catalyses the reaction (8S)-3',8-cyclo-7,8-dihydroguanosine 5'-triphosphate = cyclic pyranopterin phosphate + diphosphate. It functions in the pathway cofactor biosynthesis; molybdopterin biosynthesis. Catalyzes the conversion of (8S)-3',8-cyclo-7,8-dihydroguanosine 5'-triphosphate to cyclic pyranopterin monophosphate (cPMP). This is Cyclic pyranopterin monophosphate synthase from Photorhabdus laumondii subsp. laumondii (strain DSM 15139 / CIP 105565 / TT01) (Photorhabdus luminescens subsp. laumondii).